Here is a 336-residue protein sequence, read N- to C-terminus: tRNA-dihydrouridine(20/20a) synthase (336 aa).

FMN contacts are provided by residues 24–26 and Q77; that span reads PMM. The active-site Proton donor is the C107. FMN-binding positions include K146, H178, 218 to 220, and 240 to 241; these read NGG and GR.

Belongs to the Dus family. DusA subfamily. FMN serves as cofactor.

The catalysed reaction is 5,6-dihydrouridine(20) in tRNA + NADP(+) = uridine(20) in tRNA + NADPH + H(+). It catalyses the reaction 5,6-dihydrouridine(20) in tRNA + NAD(+) = uridine(20) in tRNA + NADH + H(+). It carries out the reaction 5,6-dihydrouridine(20a) in tRNA + NADP(+) = uridine(20a) in tRNA + NADPH + H(+). The enzyme catalyses 5,6-dihydrouridine(20a) in tRNA + NAD(+) = uridine(20a) in tRNA + NADH + H(+). Catalyzes the synthesis of 5,6-dihydrouridine (D), a modified base found in the D-loop of most tRNAs, via the reduction of the C5-C6 double bond in target uridines. Specifically modifies U20 and U20a in tRNAs. The sequence is that of tRNA-dihydrouridine(20/20a) synthase from Pseudomonas syringae pv. tomato (strain ATCC BAA-871 / DC3000).